We begin with the raw amino-acid sequence, 1334 residues long: CRISPR-associated endonuclease Cas9 (1334 aa).

Aspartate 10 (for RuvC-like nuclease domain) is an active-site residue. Mn(2+)-binding residues include aspartate 10, glutamate 765, and glutamate 769. Positions threonine 773–leucine 924 constitute an HNH Cas9-type domain. The Proton acceptor for HNH nuclease domain role is filled by histidine 843. Histidine 986 is a Mn(2+) binding site.

The protein belongs to the CRISPR-associated protein Cas9 family. Subtype II-A subfamily. Monomer. Binds crRNA and tracrRNA. Mg(2+) is required as a cofactor.

CRISPR (clustered regularly interspaced short palindromic repeat) is an adaptive immune system that provides protection against mobile genetic elements (viruses, transposable elements and conjugative plasmids). CRISPR clusters contain spacers, sequences complementary to antecedent mobile elements, and target invading nucleic acids. CRISPR clusters are transcribed and processed into CRISPR RNA (crRNA). In type II CRISPR systems correct processing of pre-crRNA requires a trans-encoded small RNA (tracrRNA), endogenous ribonuclease 3 (rnc) and this protein. The tracrRNA serves as a guide for ribonuclease 3-aided processing of pre-crRNA. Subsequently Cas9/crRNA/tracrRNA endonucleolytically cleaves linear or circular dsDNA target complementary to the spacer; Cas9 is inactive in the absence of the 2 guide RNAs (gRNA). Cas9 recognizes the protospacer adjacent motif (PAM) in the CRISPR repeat sequences to help distinguish self versus nonself, as targets within the bacterial CRISPR locus do not have PAMs. PAM recognition is also required for catalytic activity. The protein is CRISPR-associated endonuclease Cas9 of Listeria innocua serovar 6a (strain ATCC BAA-680 / CLIP 11262).